The following is a 215-amino-acid chain: Cytochrome b6 (215 aa).

The helical transmembrane segment at 32 to 52 (IFYCLGGITLTCFLVQVATGF) threads the bilayer. Residue C35 coordinates heme c. Residues H86 and H100 each contribute to the heme b site. 3 consecutive transmembrane segments (helical) span residues 90–110 (ASMM…TGGF), 116–136 (LTWV…VTGY), and 186–206 (LHTF…FLMI). The heme b site is built by H187 and H202.

This sequence belongs to the cytochrome b family. PetB subfamily. The 4 large subunits of the cytochrome b6-f complex are cytochrome b6, subunit IV (17 kDa polypeptide, PetD), cytochrome f and the Rieske protein, while the 4 small subunits are PetG, PetL, PetM and PetN. The complex functions as a dimer. Heme b is required as a cofactor. It depends on heme c as a cofactor.

The protein localises to the plastid. It localises to the chloroplast thylakoid membrane. Functionally, component of the cytochrome b6-f complex, which mediates electron transfer between photosystem II (PSII) and photosystem I (PSI), cyclic electron flow around PSI, and state transitions. The sequence is that of Cytochrome b6 from Marchantia polymorpha (Common liverwort).